Reading from the N-terminus, the 189-residue chain is Penicillin-binding protein activator LpoB (189 aa).

The N-terminal stretch at 1-16 (MRRILFVALSVMFLAG) is a signal peptide. C17 carries the N-palmitoyl cysteine lipid modification. Residue C17 is the site of S-diacylglycerol cysteine attachment. The interval 18–52 (PSLPPEQPEPPTPVVPVTPSEKPTPPSEKVPEPPK) is disordered. Residues 19-45 (SLPPEQPEPPTPVVPVTPSEKPTPPSE) are compositionally biased toward pro residues.

Belongs to the LpoB family. In terms of assembly, interacts with PBP1b.

The protein localises to the cell outer membrane. In terms of biological role, regulator of peptidoglycan synthesis that is essential for the function of penicillin-binding protein 1B (PBP1b). The sequence is that of Penicillin-binding protein activator LpoB from Photorhabdus laumondii subsp. laumondii (strain DSM 15139 / CIP 105565 / TT01) (Photorhabdus luminescens subsp. laumondii).